Consider the following 171-residue polypeptide: S-ribosylhomocysteine lyase (171 aa).

Residues His-54, His-58, and Cys-128 each coordinate Fe cation.

This sequence belongs to the LuxS family. In terms of assembly, homodimer. Fe cation serves as cofactor.

It catalyses the reaction S-(5-deoxy-D-ribos-5-yl)-L-homocysteine = (S)-4,5-dihydroxypentane-2,3-dione + L-homocysteine. Involved in the synthesis of autoinducer 2 (AI-2) which is secreted by bacteria and is used to communicate both the cell density and the metabolic potential of the environment. The regulation of gene expression in response to changes in cell density is called quorum sensing. Catalyzes the transformation of S-ribosylhomocysteine (RHC) to homocysteine (HC) and 4,5-dihydroxy-2,3-pentadione (DPD). The sequence is that of S-ribosylhomocysteine lyase from Campylobacter curvus (strain 525.92).